A 481-amino-acid polypeptide reads, in one-letter code: Proline--tRNA ligase (481 aa).

It belongs to the class-II aminoacyl-tRNA synthetase family. ProS type 3 subfamily. Homodimer.

The protein localises to the cytoplasm. It catalyses the reaction tRNA(Pro) + L-proline + ATP = L-prolyl-tRNA(Pro) + AMP + diphosphate. In terms of biological role, catalyzes the attachment of proline to tRNA(Pro) in a two-step reaction: proline is first activated by ATP to form Pro-AMP and then transferred to the acceptor end of tRNA(Pro). The sequence is that of Proline--tRNA ligase from Thermococcus kodakarensis (strain ATCC BAA-918 / JCM 12380 / KOD1) (Pyrococcus kodakaraensis (strain KOD1)).